The following is a 360-amino-acid chain: Decorin (360 aa).

Positions 1 to 16 are cleaved as a signal peptide; the sequence is MKATIIFLLVAQVSWA. The propeptide occupies 17–30; it reads GPFQQKGLFDFMLE. An O-linked (Xyl...) (glycosaminoglycan) serine glycan is attached at Ser34. Cystine bridges form between Cys55–Cys61 and Cys59–Cys68. LRR repeat units follow at residues 74 to 94, 95 to 118, 119 to 142, 143 to 163, 164 to 187, 188 to 213, 214 to 234, 235 to 258, 259 to 282, 283 to 305, 306 to 335, and 336 to 360; these read EKVP…NNKI, TEIK…NNKI, SKIS…KNQL, KELP…ENEI, TKVR…TNPL, KSSG…DTNI, TTIP…GNKI, TKVD…FNSI, SAVD…NNKL, VKVP…NNNI, SAIG…SNPV, and QYWE…GNYK. Residue Asn212 is glycosylated (N-linked (GlcNAc...) asparagine). 2 N-linked (GlcNAc...) asparagine glycosylation sites follow: Asn263 and Asn304. A disulfide bond links Cys314 and Cys347.

It belongs to the small leucine-rich proteoglycan (SLRP) family. SLRP class I subfamily. Binds to type I and type II collagen, fibronectin and TGF-beta. Forms a ternary complex with MFAP2 and ELN. Interacts with DPT. Post-translationally, the attached glycosaminoglycan chain can be either chondroitin 4-sulfate, chondroitin 6-sulfate or dermatan sulfate, depending upon the tissue of origin.

It is found in the secreted. Its subcellular location is the extracellular space. The protein localises to the extracellular matrix. In terms of biological role, may affect the rate of fibrils formation. The sequence is that of Decorin (DCN) from Bos taurus (Bovine).